Consider the following 446-residue polypeptide: N-succinylarginine dihydrolase (446 aa).

Substrate is bound by residues 19 to 28 (AGLSFGNVAS), Asn110, and 137 to 138 (HR). The active site involves Glu174. Position 213 (Arg213) interacts with substrate. The active site involves His249. 2 residues coordinate substrate: Asp251 and Asn364. Cys370 serves as the catalytic Nucleophile.

Belongs to the succinylarginine dihydrolase family. Homodimer.

The enzyme catalyses N(2)-succinyl-L-arginine + 2 H2O + 2 H(+) = N(2)-succinyl-L-ornithine + 2 NH4(+) + CO2. It participates in amino-acid degradation; L-arginine degradation via AST pathway; L-glutamate and succinate from L-arginine: step 2/5. Its function is as follows. Catalyzes the hydrolysis of N(2)-succinylarginine into N(2)-succinylornithine, ammonia and CO(2). This Burkholderia pseudomallei (strain 668) protein is N-succinylarginine dihydrolase.